The primary structure comprises 246 residues: O-antigen export system ATP-binding protein RfbB (246 aa).

The ABC transporter domain maps to 22-246; sequence SGIKDLIFHP…IIELYKQAMA (225 aa). 63–70 lines the ATP pocket; it reads GRNGAGKS.

This sequence belongs to the ABC transporter superfamily.

It localises to the cell inner membrane. May form an ATP-driven O-antigen export apparatus, in association with RfbA. The chain is O-antigen export system ATP-binding protein RfbB (rfbB) from Klebsiella pneumoniae.